The chain runs to 510 residues: Cytochrome P450 monooxygenase penQ (510 aa).

Residues 9–26 form a helical membrane-spanning segment; sequence WIVTLIVAATTYCTLRWV. N148 and N341 each carry an N-linked (GlcNAc...) asparagine glycan. C448 is a binding site for heme. N482 is a glycosylation site (N-linked (GlcNAc...) asparagine).

Belongs to the cytochrome P450 family. It depends on heme as a cofactor.

It localises to the membrane. It participates in secondary metabolite biosynthesis. Cytochrome P450 monooxygenase; part of the gene cluster that mediates the biosynthesis of the indole diterpenes penitrems. The geranylgeranyl diphosphate (GGPP) synthase penG catalyzes the first step in penitrem biosynthesis via conversion of farnesyl pyrophosphate and isopentyl pyrophosphate into geranylgeranyl pyrophosphate (GGPP). Condensation of indole-3-glycerol phosphate with GGPP by the prenyl transferase penC then forms 3-geranylgeranylindole (3-GGI). Epoxidation by the FAD-dependent monooxygenase penM leads to a epoxidized-GGI that is substrate of the terpene cyclase penB for cyclization to yield paspaline. Paspaline is subsequently converted to 13-desoxypaxilline by the cytochrome P450 monooxygenase penP, the latter being then converted to paxilline by the cytochrome P450 monooxygenase penQ. Paxilline is converted to beta-paxitriol via C-10 ketoreduction by the short-chain dehydrogenase PC-15 which can be monoprenylated at the C-20 by the indole diterpene prenyltransferase penD. A two-step elimination (acetylation and elimination) process performed by the O-acetyltransferase PC-16 and the P.simplicissimum ptmI-ortholog not yet identified in P.crustosum, leads to the production of the prenylated form of penijanthine. The FAD-linked oxidoreductase ptmO then converts the prenylated form of penijanthine into PC-M5 which is in turn transformed into PC-M4 by the aromatic dimethylallyltransferase PC-22. A series of oxidation steps involving 4 cytochrome P450 monooxygenases (PC-21, PC-05, PC-23, PC-20) and a FAD-dependent monooxygenase (PC-14) are required for the transformation of PC-M4 to penitrems A and E. Synthesis of these final products is proposed to proceed via penitrems D and C (PC-21, PC-05, PC-14) and penitrems B and F (PC-21, PC-05, PC-14, PC-23). This chain is Cytochrome P450 monooxygenase penQ, found in Penicillium crustosum (Blue mold fungus).